A 117-amino-acid polypeptide reads, in one-letter code: Large ribosomal subunit protein bL20 (117 aa).

This sequence belongs to the bacterial ribosomal protein bL20 family.

Functionally, binds directly to 23S ribosomal RNA and is necessary for the in vitro assembly process of the 50S ribosomal subunit. It is not involved in the protein synthesizing functions of that subunit. This is Large ribosomal subunit protein bL20 from Histophilus somni (strain 129Pt) (Haemophilus somnus).